Consider the following 843-residue polypeptide: OTU domain-containing protein 7B (843 aa).

A disordered region spans residues 50–88 (GNLPPSFSEGSGGSRTPEKGFSDREPTRPPRPILQRQDD). Residues 65 to 77 (TPEKGFSDREPTR) show a composition bias toward basic and acidic residues. Ser100 is modified (phosphoserine). A TRAF-binding region spans residues 152–401 (ERDLIEQSML…AVDPGKGWEW (250 aa)). Residues 167 to 440 (AGRLNWWVSV…VKWIPLSSDA (274 aa)) are catalytic. Residues 183-365 (LLPLATTGDG…QAHFSALVSM (183 aa)) form the OTU domain. Positions 187 to 193 (ATTGDGN) are regulatory loop. Asp191 is an active-site residue. Residue Cys194 is the Nucleophile of the active site. His358 serves as the catalytic Proton acceptor. Disordered stretches follow at residues 442 to 587 (APLA…GGSK) and 652 to 711 (IMNG…CQEP). Basic and acidic residues-rich tracts occupy residues 456–471 (DEPR…DKES) and 488–500 (SKRD…KRAD). Residues Ser464, Ser467, and Ser471 each carry the phosphoserine modification. The Nuclear localization signal signature appears at 483-498 (RRKEKSKRDREKDKKR). Gly residues predominate over residues 531 to 543 (KPGGVGTGLGGSS). A compositionally biased stretch (basic and acidic residues) spans 665-675 (KKPEPDAREEQ). Residue Thr729 is modified to Phosphothreonine. A disordered region spans residues 732-792 (RQCPPGRPYP…PEPDGWAGGL (61 aa)). The A20-type zinc-finger motif lies at 796–831 (PPTQTKCKQPNCSFYGHPETNNFCSCCYREELRRRE). 4 residues coordinate Zn(2+): Cys802, Cys807, Cys819, and Cys822.

This sequence belongs to the peptidase C64 family. In terms of assembly, interacts with ZAP70 in activated T cells, but not in resting T cells. Interacts with TRAF3. Interacts with TRAF6. Interacts with PARK7, leading to inhibit deubiquitinase activity. Interacts with EGFR, ITCH and NEDD4. Post-translationally, phosphorylated by EGFR. In terms of tissue distribution, widely expressed. Abundant in kidney, heart and fetal liver. Expressed differentially among B-cells at distinct developmental stages. Higher expression seen in primary immature B-cells as compared to the mature cells.

The protein resides in the cytoplasm. It localises to the nucleus. It catalyses the reaction Thiol-dependent hydrolysis of ester, thioester, amide, peptide and isopeptide bonds formed by the C-terminal Gly of ubiquitin (a 76-residue protein attached to proteins as an intracellular targeting signal).. Its activity is regulated as follows. Deubiquitinase activity is inhibited following interaction with PARK7. Functionally, negative regulator of the non-canonical NF-kappa-B pathway that acts by mediating deubiquitination of TRAF3, an inhibitor of the NF-kappa-B pathway, thereby acting as a negative regulator of B-cell responses. In response to non-canonical NF-kappa-B stimuli, deubiquitinates 'Lys-48'-linked polyubiquitin chains of TRAF3, preventing TRAF3 proteolysis and over-activation of non-canonical NF-kappa-B. Negatively regulates mucosal immunity against infections. Deubiquitinates ZAP70, and thereby regulates T cell receptor (TCR) signaling that leads to the activation of NF-kappa-B. Plays a role in T cell homeostasis and is required for normal T cell responses, including production of IFNG and IL2. Mediates deubiquitination of EGFR. Has deubiquitinating activity toward 'Lys-11', 'Lys-48' and 'Lys-63'-linked polyubiquitin chains. Has a much higher catalytic rate with 'Lys-11'-linked polyubiquitin chains (in vitro); however the physiological significance of these data are unsure. Hydrolyzes both linear and branched forms of polyubiquitin. Acts as a regulator of mTORC1 and mTORC2 assembly by mediating 'Lys-63'-linked deubiquitination of MLST8, thereby promoting assembly of the mTORC2 complex, while inibiting formation of the mTORC1 complex. The polypeptide is OTU domain-containing protein 7B (OTUD7B) (Homo sapiens (Human)).